We begin with the raw amino-acid sequence, 396 residues long: S-arrestin (396 aa).

Basic and acidic residues predominate over residues 375–386; sequence ARDPLKGELQAE. Residues 375–396 are disordered; it reads ARDPLKGELQAEEKEEEEDDEK. The segment covering 387–396 has biased composition (acidic residues); sequence EKEEEEDDEK.

The protein belongs to the arrestin family. As to quaternary structure, interacts with RHO (via the phosphorylated C-terminus).

It is found in the cell projection. The protein localises to the cilium. Its subcellular location is the photoreceptor outer segment. The protein resides in the membrane. In terms of biological role, binds to photoactivated, phosphorylated RHO and terminates RHO signaling via G-proteins by competing with G-proteins for the same binding site on RHO. May play a role in preventing light-dependent degeneration of retinal photoreceptor cells. This Xenopus laevis (African clawed frog) protein is S-arrestin (sag).